The chain runs to 291 residues: 33 kDa chaperonin (291 aa).

Cystine bridges form between cysteine 237/cysteine 239 and cysteine 270/cysteine 273.

The protein belongs to the HSP33 family. Post-translationally, under oxidizing conditions two disulfide bonds are formed involving the reactive cysteines. Under reducing conditions zinc is bound to the reactive cysteines and the protein is inactive.

Its subcellular location is the cytoplasm. In terms of biological role, redox regulated molecular chaperone. Protects both thermally unfolding and oxidatively damaged proteins from irreversible aggregation. Plays an important role in the bacterial defense system toward oxidative stress. This is 33 kDa chaperonin from Bacillus anthracis (strain A0248).